The chain runs to 161 residues: MEELGRNVDVSIFRILRFMNLRKYIGIDNEMLMYYFGKELSKNLNFKNFKELSNFYKEYKLGRIEMVSENPIKIRIYDCISCSGLPDVGKPLCHFEAGFLAGYIENVFNKKCYIIETHCWGLGNKFCQFEVRLVDNKKSENCFASSGDCNGYFGKNRTKKL.

The protein belongs to the M.jannaschii MJ0150/MJ0739/MJ0745/MJ1460/MJ1642 family.

This is an uncharacterized protein from Methanocaldococcus jannaschii (strain ATCC 43067 / DSM 2661 / JAL-1 / JCM 10045 / NBRC 100440) (Methanococcus jannaschii).